A 640-amino-acid chain; its full sequence is Threonine--tRNA ligase (640 aa).

The TGS domain maps to 1-59; it reads MKIKVKLPDGKEKEYDRGITPAEIAKELGVKKAIGAVVNGELWDLKRPIENDCELRLVT. Residues 240 to 531 are catalytic; that stretch reads DHRKLGPHLE…LIEHFAGAFP (292 aa). Zn(2+) is bound by residues C332, H383, and H508.

The protein belongs to the class-II aminoacyl-tRNA synthetase family. In terms of assembly, homodimer. Requires Zn(2+) as cofactor.

The protein localises to the cytoplasm. The catalysed reaction is tRNA(Thr) + L-threonine + ATP = L-threonyl-tRNA(Thr) + AMP + diphosphate + H(+). Catalyzes the attachment of threonine to tRNA(Thr) in a two-step reaction: L-threonine is first activated by ATP to form Thr-AMP and then transferred to the acceptor end of tRNA(Thr). Also edits incorrectly charged L-seryl-tRNA(Thr). This is Threonine--tRNA ligase from Thermotoga petrophila (strain ATCC BAA-488 / DSM 13995 / JCM 10881 / RKU-1).